A 619-amino-acid chain; its full sequence is DNA mismatch repair protein MutL (619 aa).

This sequence belongs to the DNA mismatch repair MutL/HexB family.

In terms of biological role, this protein is involved in the repair of mismatches in DNA. It is required for dam-dependent methyl-directed DNA mismatch repair. May act as a 'molecular matchmaker', a protein that promotes the formation of a stable complex between two or more DNA-binding proteins in an ATP-dependent manner without itself being part of a final effector complex. This chain is DNA mismatch repair protein MutL, found in Shewanella frigidimarina (strain NCIMB 400).